A 172-amino-acid chain; its full sequence is Adenine phosphoribosyltransferase (172 aa).

This sequence belongs to the purine/pyrimidine phosphoribosyltransferase family. Homodimer.

It is found in the cytoplasm. It catalyses the reaction AMP + diphosphate = 5-phospho-alpha-D-ribose 1-diphosphate + adenine. Its pathway is purine metabolism; AMP biosynthesis via salvage pathway; AMP from adenine: step 1/1. Its function is as follows. Catalyzes a salvage reaction resulting in the formation of AMP, that is energically less costly than de novo synthesis. This Clostridium kluyveri (strain NBRC 12016) protein is Adenine phosphoribosyltransferase.